Here is a 352-residue protein sequence, read N- to C-terminus: Phosphoribosylformylglycinamidine cyclo-ligase (352 aa).

It belongs to the AIR synthase family.

The protein localises to the cytoplasm. It carries out the reaction 2-formamido-N(1)-(5-O-phospho-beta-D-ribosyl)acetamidine + ATP = 5-amino-1-(5-phospho-beta-D-ribosyl)imidazole + ADP + phosphate + H(+). It participates in purine metabolism; IMP biosynthesis via de novo pathway; 5-amino-1-(5-phospho-D-ribosyl)imidazole from N(2)-formyl-N(1)-(5-phospho-D-ribosyl)glycinamide: step 2/2. The sequence is that of Phosphoribosylformylglycinamidine cyclo-ligase from Pseudomonas fluorescens (strain Pf0-1).